The following is a 462-amino-acid chain: Sodium-coupled neutral amino acid transporter 7 (462 aa).

The residue at position 28 (S28) is a Phosphoserine. Helical transmembrane passes span 56–76 (AIFI…PAAF), 82–102 (VAAG…GLVI), 130–150 (LCEV…LIII), 178–198 (FTIS…REIG), 205–225 (FLSV…YIWP), 239–259 (ASWM…QCHV), 282–302 (AAMV…FLTF), 319–339 (MAVA…YPIL), 371–391 (VLQT…IPDI), 395–415 (ISVI…LCLI), and 428–448 (ASWW…AFIF).

The protein belongs to the amino acid/polyamine transporter 2 family. Interacts with the mTORC1 complex; this interaction mediates the recruitment of mTORC1 to the lysosome and its subsequent activation.

Its subcellular location is the lysosome membrane. It localises to the cell projection. The protein localises to the axon. The catalysed reaction is L-asparagine(in) + Na(+)(in) = L-asparagine(out) + Na(+)(out). The enzyme catalyses L-glutamine(in) + Na(+)(in) = L-glutamine(out) + Na(+)(out). In terms of biological role, symporter that selectively cotransports sodium ions and amino acids, such as L-glutamine and L-asparagine from the lysosome into the cytoplasm and may participates in mTORC1 activation. The transport activity requires an acidic lysosomal lumen. The chain is Sodium-coupled neutral amino acid transporter 7 from Homo sapiens (Human).